The primary structure comprises 723 residues: Nuclear hormone receptor HR96 (723 aa).

Positions 4–79 (PKNCAVCGDK…IGMKSENIMS (76 aa)) form a DNA-binding region, nuclear receptor. 2 consecutive NR C4-type zinc fingers follow at residues 7-27 (CAVC…CESC) and 43-67 (CPFN…LRKC). The segment at 95-163 (AKRRLMENGT…QASSPGTQVN (69 aa)) is disordered. Polar residues-rich tracts occupy residues 122-142 (DSSS…SCGS) and 151-163 (SGRQ…TQVN). One can recognise an NR LBD domain in the interval 483–723 (EQMKLRELRL…LREIFDLKNH (241 aa)).

Belongs to the nuclear hormone receptor family. NR1 subfamily.

It is found in the nucleus. In terms of biological role, binds selectively to the HSP27 20E response element. The sequence is that of Nuclear hormone receptor HR96 (Hr96) from Drosophila melanogaster (Fruit fly).